The following is a 545-amino-acid chain: MVTIVLNKYKLLDKIHIGQQKLEDLLFNLKSEVKPIDENNIEIEINADRLDLLSSDGIARAIKGLLEKELGEAKYNVTDTEYTLIVDNVRTRPYALAAIVYNAKIDLEELIQFQEKLHGTIGRKRKKVAIGIHDLRKVDSKTIEYKEVPLSYKFVPLYGNKELTISEILEKTEQGKLYGNISIANGVSPAIVQDDGEVLSIPPIINSNKTRLDENTKDFFIDVTGTSFEAVAQTLDIIVSNLAEAGGTIGRVKVLKSANSSQLSSPLFLHKIQNVREEYVKKILGIKTSKEEICKHVMRMRMNCDIENGVIRVTVPQYRVDILNEIDVVEDIAMSIGYNNLEPSKYISTNYGSYDYMTLLERKIRELGIGAGYVEISNFVLIKDEKLFSNKYVKILNPVTEEYNAVRNSLIPGLLDFLSKNQHAKFPIRVFETGDVVVYDSSTDTGFRNDKRAAYAIMDNKVSYEDIQAPIHYILKSLGLEVNYKEENNNIFIEGRSASIFYENEKMGVIGEVNPDVLIRFGIEYPAVIAELYISEIAKRLTNQR.

Residues 268 to 343 (FLHKIQNVRE…MSIGYNNLEP (76 aa)) enclose the B5 domain. Positions 321, 327, 330, and 331 each coordinate Mg(2+).

This sequence belongs to the phenylalanyl-tRNA synthetase beta subunit family. Type 2 subfamily. As to quaternary structure, tetramer of two alpha and two beta subunits. Mg(2+) serves as cofactor.

The protein resides in the cytoplasm. It carries out the reaction tRNA(Phe) + L-phenylalanine + ATP = L-phenylalanyl-tRNA(Phe) + AMP + diphosphate + H(+). In Saccharolobus islandicus (strain L.S.2.15 / Lassen #1) (Sulfolobus islandicus), this protein is Phenylalanine--tRNA ligase beta subunit.